A 149-amino-acid chain; its full sequence is Large ribosomal subunit protein bL9 (149 aa).

The protein belongs to the bacterial ribosomal protein bL9 family.

In terms of biological role, binds to the 23S rRNA. This chain is Large ribosomal subunit protein bL9, found in Vibrio vulnificus (strain CMCP6).